Reading from the N-terminus, the 151-residue chain is UPF0178 protein YaiI (151 aa).

This sequence belongs to the UPF0178 family.

The polypeptide is UPF0178 protein YaiI (Salmonella arizonae (strain ATCC BAA-731 / CDC346-86 / RSK2980)).